A 213-amino-acid polypeptide reads, in one-letter code: Phosphate-specific transport system accessory protein PhoU homolog 2 (213 aa).

Belongs to the PhoU family. Homodimer.

The protein resides in the cytoplasm. Functionally, plays a role in the regulation of phosphate uptake. In this role, it may bind, possibly as a chaperone, to PhoR, PhoP or a PhoR-PhoP complex to promote dephosphorylation of phospho-PhoP, or inhibit formation of the PhoR-PhoP transitory complex. The chain is Phosphate-specific transport system accessory protein PhoU homolog 2 (phoU2) from Mycobacterium bovis (strain ATCC BAA-935 / AF2122/97).